Consider the following 257-residue polypeptide: Homeobox protein EMX1 (257 aa).

A DNA-binding region (homeobox) is located at residues 159–218; the sequence is PKRIRTAFSPSQLLRLERAFEKNHYVVGAERKQLAGSLSLSETQVKVWFQNRRTKYKRQK. The interval 216 to 257 is disordered; the sequence is RQKLEEEGPESEQKKKGSHHINRWRIATKQANGEDIDVTSND. Residues 217–230 are compositionally biased toward basic and acidic residues; it reads QKLEEEGPESEQKK.

The protein belongs to the EMX homeobox family. As to quaternary structure, interacts with WRD11 (via the N-terminal and the central portion of the protein); the interaction associates EMX1 with GLI3. Cerebral cortex. Expressed in the olfactory bulbs.

Its subcellular location is the nucleus. Its function is as follows. Transcription factor, which in cooperation with EMX2, acts to generate the boundary between the roof and archipallium in the developing brain. May function in combinations with OTX1/2 to specify cell fates in the developing central nervous system. The sequence is that of Homeobox protein EMX1 (Emx1) from Mus musculus (Mouse).